Here is a 449-residue protein sequence, read N- to C-terminus: Heterogeneous nuclear ribonucleoprotein H2 (449 aa).

M1 carries the N-acetylmethionine modification. M2 is subject to N-acetylmethionine; in Heterogeneous nuclear ribonucleoprotein H2, N-terminally processed. In terms of domain architecture, RRM 1 spans F11–S90. Position 23 is a phosphoserine (S23). K35 is covalently cross-linked (Glycyl lysine isopeptide (Lys-Gly) (interchain with G-Cter in SUMO2)). A phosphoserine mark is found at S54 and S63. Residue K87 forms a Glycyl lysine isopeptide (Lys-Gly) (interchain with G-Cter in SUMO2) linkage. S90 bears the Phosphoserine mark. Residue K98 forms a Glycyl lysine isopeptide (Lys-Gly) (interchain with G-Cter in SUMO2) linkage. Residues G111–R188 form the RRM 2 domain. R233 carries the dimethylated arginine; alternate modification. R233 is modified (omega-N-methylarginine; alternate). The 1-1 repeat unit spans residues G234–Y249. The tract at residues G234–Y433 is 2 X 16 AA Gly-rich approximate repeats. Residue Y246 is modified to Phosphotyrosine. The 76-residue stretch at H289–T364 folds into the RRM 3 domain. S310 carries the post-translational modification Phosphoserine. 3 repeat units span residues H354–Y372, H374–Y392, and G418–Y433. The segment at H354 to Y392 is 2 X 19 AA perfect repeats.

In terms of assembly, component of a ribonucleoprotein complex containing mRNAs and RNA-binding proteins including DDX5, HNRNPH2 and SRSF1 as well as splicing regulator ARVCF. Interacts with TXNL4/DIM1.

Its subcellular location is the nucleus. The protein localises to the nucleoplasm. Its function is as follows. This protein is a component of the heterogeneous nuclear ribonucleoprotein (hnRNP) complexes which provide the substrate for the processing events that pre-mRNAs undergo before becoming functional, translatable mRNAs in the cytoplasm. Binds poly(RG). The protein is Heterogeneous nuclear ribonucleoprotein H2 (HNRNPH2) of Bos taurus (Bovine).